Reading from the N-terminus, the 446-residue chain is Trigger factor (446 aa).

In terms of domain architecture, PPIase FKBP-type spans 182 to 267 (GDKVVVDYQN…VKNIFMMKAI (86 aa)).

Belongs to the FKBP-type PPIase family. Tig subfamily.

It localises to the cytoplasm. It catalyses the reaction [protein]-peptidylproline (omega=180) = [protein]-peptidylproline (omega=0). Involved in protein export. Acts as a chaperone by maintaining the newly synthesized protein in an open conformation. Functions as a peptidyl-prolyl cis-trans isomerase. The chain is Trigger factor from Ehrlichia ruminantium (strain Gardel).